A 1462-amino-acid chain; its full sequence is Gag-Pol polyprotein (1462 aa).

Gly2 carries N-myristoyl glycine; by host lipidation. A Nuclear export signal motif is present at residues 16–22; the sequence is WESIRLK. Positions 26-32 match the Nuclear localization signal motif; that stretch reads RKKYLIK. Composition is skewed to polar residues over residues 113–125 and 135–151; these read NNSTATSSGQRQN and PSGNTGNTGRATETPSG. The segment at 113 to 153 is disordered; that stretch reads NNSTATSSGQRQNAGEKEETVPPSGNTGNTGRATETPSGSR. Position 155 is a phosphotyrosine; by host (Tyr155). CCHC-type zinc fingers lie at residues 417-434 and 438-455; these read LQCFNCGKVGHTARNCRA and KGCWRCGQEGHQMKDCTT. The interval 482-513 is disordered; the sequence is EHPREREGSGAGDSTDTSGANCPTTGDDDERR. One can recognise a Peptidase A2 domain in the interval 535-604; it reads CQALLDTGAD…TPINIIGRNI (70 aa). Asp540 acts as the For protease activity; shared with dimeric partner in catalysis. A Reverse transcriptase domain is found at 658–848; sequence EGKISAVGPE…PPFMWMGYEL (191 aa). Residues Asp724, Asp799, and Asp800 each coordinate Mg(2+). An RT 'primer grip' region spans residues 841–849; the sequence is FMWMGYELH. Residues 1012–1028 carry the Tryptophan repeat motif motif; the sequence is WSQWWTDYWQVTWVPEW. The 124-residue stretch at 1048–1171 folds into the RNase H type-1 domain; it reads IPEAETFYVD…VDKLVSKNIR (124 aa). Positions 1057, 1092, 1112, and 1163 each coordinate Mg(2+). The Integrase-type zinc finger occupies 1177 to 1218; it reads DGINEAQEDHDKYHSNWKALADEYNLPPVVAKEIIAQCPKCH. Residues His1186, His1190, Cys1214, and Cys1217 each contribute to the Zn(2+) site. In terms of domain architecture, Integrase catalytic spans 1228 to 1378; it reads VDYSPEIWQI…TAGERLLDIL (151 aa). Asp1238 and Asp1290 together coordinate Mg(2+). The segment at residues 1397–1444 is a DNA-binding region (integrase-type); the sequence is FRVYYRDARDPIWKGPARLLWKGEGAVVIKEGEDIKVVPRRKAKIIKE.

Homotrimer. Interacts with gp41 (via C-terminus). In terms of assembly, homodimer. The active site consists of two apposed aspartic acid residues. As to quaternary structure, heterodimer of p66 RT and p51 RT (RT p66/p51). Heterodimerization of RT is essential for DNA polymerase activity. Despite the sequence identities, p66 RT and p51 RT have distinct folding. Homotetramer; may further associate as a homohexadecamer. Mg(2+) is required as a cofactor. In terms of processing, specific enzymatic cleavages by the viral protease yield mature proteins. The protease is released by autocatalytic cleavage. The polyprotein is cleaved during and after budding, this process is termed maturation. Proteolytic cleavage of p66 RT removes the RNase H domain to yield the p51 RT subunit. Post-translationally, capsid protein p24 is phosphorylated.

It localises to the virion. The protein localises to the host nucleus. It is found in the host cytoplasm. The protein resides in the host cell membrane. It catalyses the reaction Specific for a P1 residue that is hydrophobic, and P1' variable, but often Pro.. The catalysed reaction is Endohydrolysis of RNA in RNA/DNA hybrids. Three different cleavage modes: 1. sequence-specific internal cleavage of RNA. Human immunodeficiency virus type 1 and Moloney murine leukemia virus enzymes prefer to cleave the RNA strand one nucleotide away from the RNA-DNA junction. 2. RNA 5'-end directed cleavage 13-19 nucleotides from the RNA end. 3. DNA 3'-end directed cleavage 15-20 nucleotides away from the primer terminus.. The enzyme catalyses 3'-end directed exonucleolytic cleavage of viral RNA-DNA hybrid.. It carries out the reaction DNA(n) + a 2'-deoxyribonucleoside 5'-triphosphate = DNA(n+1) + diphosphate. With respect to regulation, the viral protease is inhibited by many synthetic protease inhibitors (PIs), such as amprenavir, atazanavir, indinavir, loprinavir, nelfinavir, ritonavir and saquinavir. RT can be inhibited either by nucleoside RT inhibitors (NRTIs) or by non nucleoside RT inhibitors (NNRTIs). NRTIs act as chain terminators, whereas NNRTIs inhibit DNA polymerization by binding a small hydrophobic pocket near the RT active site and inducing an allosteric change in this region. Classical NRTIs are abacavir, adefovir (PMEA), didanosine (ddI), lamivudine (3TC), stavudine (d4T), tenofovir (PMPA), zalcitabine (ddC), and zidovudine (AZT). Classical NNRTIs are atevirdine (BHAP U-87201E), delavirdine, efavirenz (DMP-266), emivirine (I-EBU), and nevirapine (BI-RG-587). The tritherapies used as a basic effective treatment of AIDS associate two NRTIs and one NNRTI. Use of protease inhibitors in tritherapy regimens permit more ambitious therapeutic strategies. Gag-Pol polyprotein and Gag polyprotein may regulate their own translation, by the binding genomic RNA in the 5'-UTR. At low concentration, Gag-Pol and Gag would promote translation, whereas at high concentration, the polyproteins encapsidate genomic RNA and then shut off translation. In terms of biological role, matrix protein p17 has two main functions: in infected cell, it targets Gag and Gag-pol polyproteins to the plasma membrane via a multipartite membrane-binding signal, that includes its myristointegration complex. The myristoylation signal and the NLS exert conflicting influences its subcellular localization. The key regulation of these motifs might be phosphorylation of a portion of MA molecules on the C-terminal tyrosine at the time of virus maturation, by virion-associated cellular tyrosine kinase. Implicated in the release from host cell mediated by Vpu. Its function is as follows. Capsid protein p24 forms the conical core that encapsulates the genomic RNA-nucleocapsid complex in the virion. The core is constituted by capsid protein hexamer subunits. The core is disassembled soon after virion entry. Interaction with host PPIA/CYPA protects the virus from restriction by host TRIM5-alpha and from an unknown antiviral activity in host cells. This capsid restriction by TRIM5 is one of the factors which restricts SIV to the simian species. Functionally, nucleocapsid protein p7 encapsulates and protects viral dimeric unspliced (genomic) RNA. Binds these RNAs through its zinc fingers. Facilitates rearangement of nucleic acid secondary structure during retrotranscription of genomic RNA. This capability is referred to as nucleic acid chaperone activity. The aspartyl protease mediates proteolytic cleavages of Gag and Gag-Pol polyproteins during or shortly after the release of the virion from the plasma membrane. Cleavages take place as an ordered, step-wise cascade to yield mature proteins. This process is called maturation. Displays maximal activity during the budding process just prior to particle release from the cell. Also cleaves Nef and Vif, probably concomitantly with viral structural proteins on maturation of virus particles. Hydrolyzes host EIF4GI and PABP1 in order to shut off the capped cellular mRNA translation. The resulting inhibition of cellular protein synthesis serves to ensure maximal viral gene expression and to evade host immune response. In terms of biological role, reverse transcriptase/ribonuclease H (RT) is a multifunctional enzyme that converts the viral dimeric RNA genome into dsDNA in the cytoplasm, shortly after virus entry into the cell. This enzyme displays a DNA polymerase activity that can copy either DNA or RNA templates, and a ribonuclease H (RNase H) activity that cleaves the RNA strand of RNA-DNA heteroduplexes in a partially processive 3' to 5' endonucleasic mode. Conversion of viral genomic RNA into dsDNA requires many steps. A tRNA binds to the primer-binding site (PBS) situated at the 5'-end of the viral RNA. RT uses the 3' end of the tRNA primer to perform a short round of RNA-dependent minus-strand DNA synthesis. The reading proceeds through the U5 region and ends after the repeated (R) region which is present at both ends of viral RNA. The portion of the RNA-DNA heteroduplex is digested by the RNase H, resulting in a ssDNA product attached to the tRNA primer. This ssDNA/tRNA hybridizes with the identical R region situated at the 3' end of viral RNA. This template exchange, known as minus-strand DNA strong stop transfer, can be either intra- or intermolecular. RT uses the 3' end of this newly synthesized short ssDNA to perform the RNA-dependent minus-strand DNA synthesis of the whole template. RNase H digests the RNA template except for two polypurine tracts (PPTs) situated at the 5'-end and near the center of the genome. It is not clear if both polymerase and RNase H activities are simultaneous. RNase H can probably proceed both in a polymerase-dependent (RNA cut into small fragments by the same RT performing DNA synthesis) and a polymerase-independent mode (cleavage of remaining RNA fragments by free RTs). Secondly, RT performs DNA-directed plus-strand DNA synthesis using the PPTs that have not been removed by RNase H as primers. PPTs and tRNA primers are then removed by RNase H. The 3' and 5' ssDNA PBS regions hybridize to form a circular dsDNA intermediate. Strand displacement synthesis by RT to the PBS and PPT ends produces a blunt ended, linear dsDNA copy of the viral genome that includes long terminal repeats (LTRs) at both ends. Its function is as follows. Integrase catalyzes viral DNA integration into the host chromosome, by performing a series of DNA cutting and joining reactions. This enzyme activity takes place after virion entry into a cell and reverse transcription of the RNA genome in dsDNA. The first step in the integration process is 3' processing. This step requires a complex comprising the viral genome, matrix protein, Vpr and integrase. This complex is called the pre-integration complex (PIC). The integrase protein removes 2 nucleotides from each 3' end of the viral DNA, leaving recessed CA OH's at the 3' ends. In the second step, the PIC enters cell nucleus. This process is mediated through integrase and Vpr proteins, and allows the virus to infect a non dividing cell. This ability to enter the nucleus is specific of lentiviruses, other retroviruses cannot and rely on cell division to access cell chromosomes. In the third step, termed strand transfer, the integrase protein joins the previously processed 3' ends to the 5' ends of strands of target cellular DNA at the site of integration. The 5'-ends are produced by integrase-catalyzed staggered cuts, 5 bp apart. A Y-shaped, gapped, recombination intermediate results, with the 5'-ends of the viral DNA strands and the 3' ends of target DNA strands remaining unjoined, flanking a gap of 5 bp. The last step is viral DNA integration into host chromosome. This involves host DNA repair synthesis in which the 5 bp gaps between the unjoined strands are filled in and then ligated. Since this process occurs at both cuts flanking the SIV genome, a 5 bp duplication of host DNA is produced at the ends of SIV integration. Alternatively, Integrase may catalyze the excision of viral DNA just after strand transfer, this is termed disintegration. The chain is Gag-Pol polyprotein (gag-pol) from Simian immunodeficiency virus (isolate TAN1) (SIV-cpz).